A 446-amino-acid polypeptide reads, in one-letter code: Alpha-1,6-mannosyl-glycoprotein 2-beta-N-acetylglucosaminyltransferase (446 aa).

The Cytoplasmic segment spans residues methionine 1–lysine 9. The chain crosses the membrane as a helical; Signal-anchor for type II membrane protein span at residues valine 10 to glycine 29. Topologically, residues arginine 30–glutamine 446 are lumenal. 2 N-linked (GlcNAc...) asparagine glycosylation sites follow: asparagine 69 and asparagine 86. Residues glutamine 123 to arginine 127 and aspartate 154 contribute to the substrate site. An intrachain disulfide couples cysteine 196 to cysteine 210. Glutamine 229–histidine 233 contributes to the substrate binding site. Aspartate 261 contributes to the Mn(2+) binding site. Cysteines 283 and 286 form a disulfide. Position 298 (arginine 298) interacts with substrate. Intrachain disulfides connect cysteine 334–cysteine 357, cysteine 339–cysteine 439, and cysteine 378–cysteine 386. Residue histidine 374 participates in Mn(2+) binding.

Belongs to the glycosyltransferase 16 (GT16) protein family. In terms of assembly, homodimer. Mn(2+) is required as a cofactor.

It localises to the golgi apparatus membrane. It carries out the reaction an N(4)-{beta-D-GlcNAc-(1-&gt;2)-alpha-D-Man-(1-&gt;3)-[alpha-D-Man-(1-&gt;6)]-beta-D-Man-(1-&gt;4)-beta-D-GlcNAc-(1-&gt;4)-beta-D-GlcNAc}-L-asparaginyl-[protein] + UDP-N-acetyl-alpha-D-glucosamine = N(4)-{beta-D-GlcNAc-(1-&gt;2)-alpha-D-Man-(1-&gt;3)-[beta-D-GlcNAc-(1-&gt;2)-alpha-D-Man-(1-&gt;6)]-beta-D-Man-(1-&gt;4)-beta-D-GlcNAc-(1-&gt;4)-beta-D-GlcNAc}-L-asparaginyl-[protein] + UDP + H(+). Its pathway is protein modification; protein glycosylation. Functionally, plays an essential role in protein N-glycosylation. Catalyzes the transfer of N-acetylglucosamine (GlcNAc) onto the free terminal mannose moiety in the core structure of the nascent N-linked glycan chain, giving rise to the second branch in complex glycans. This Sus scrofa (Pig) protein is Alpha-1,6-mannosyl-glycoprotein 2-beta-N-acetylglucosaminyltransferase (MGAT2).